The following is a 232-amino-acid chain: 5'-methylthioadenosine/S-adenosylhomocysteine nucleosidase (232 aa).

E12 acts as the Proton acceptor in catalysis. Residues G78, I152, and 173-174 (ME) each bind substrate. The active-site Proton donor is the D197.

This sequence belongs to the PNP/UDP phosphorylase family. MtnN subfamily. In terms of assembly, homodimer.

It carries out the reaction S-adenosyl-L-homocysteine + H2O = S-(5-deoxy-D-ribos-5-yl)-L-homocysteine + adenine. It catalyses the reaction S-methyl-5'-thioadenosine + H2O = 5-(methylsulfanyl)-D-ribose + adenine. The enzyme catalyses 5'-deoxyadenosine + H2O = 5-deoxy-D-ribose + adenine. It functions in the pathway amino-acid biosynthesis; L-methionine biosynthesis via salvage pathway; S-methyl-5-thio-alpha-D-ribose 1-phosphate from S-methyl-5'-thioadenosine (hydrolase route): step 1/2. Functionally, catalyzes the irreversible cleavage of the glycosidic bond in both 5'-methylthioadenosine (MTA) and S-adenosylhomocysteine (SAH/AdoHcy) to adenine and the corresponding thioribose, 5'-methylthioribose and S-ribosylhomocysteine, respectively. Also cleaves 5'-deoxyadenosine, a toxic by-product of radical S-adenosylmethionine (SAM) enzymes, into 5-deoxyribose and adenine. Thus, is required for in vivo function of the radical SAM enzymes biotin synthase and lipoic acid synthase, that are inhibited by 5'-deoxyadenosine accumulation. The polypeptide is 5'-methylthioadenosine/S-adenosylhomocysteine nucleosidase (Salmonella paratyphi A (strain ATCC 9150 / SARB42)).